The following is a 154-amino-acid chain: Putative peroxiredoxin MT1643 (154 aa).

In terms of domain architecture, Thioredoxin spans 1–153 (MKTGDTVADF…ALATLRAIRS (153 aa)). The active-site Cysteine sulfenic acid (-SOH) intermediate is the Cys-44. A disulfide bridge links Cys-44 with Cys-49.

The protein belongs to the peroxiredoxin family. BCP/PrxQ subfamily. As to quaternary structure, monomer.

It catalyses the reaction a hydroperoxide + [thioredoxin]-dithiol = an alcohol + [thioredoxin]-disulfide + H2O. Thiol-specific peroxidase that catalyzes the reduction of hydrogen peroxide and organic hydroperoxides to water and alcohols, respectively. Plays a role in cell protection against oxidative stress by detoxifying peroxides and as sensor of hydrogen peroxide-mediated signaling events. This chain is Putative peroxiredoxin MT1643 (bcpB), found in Mycobacterium tuberculosis (strain CDC 1551 / Oshkosh).